We begin with the raw amino-acid sequence, 105 residues long: Putative thioredoxin-5 (105 aa).

The region spanning 1-104 is the Thioredoxin domain; that stretch reads MYKEPKNESE…VALENMVKKL (104 aa). Residues Cys30 and Cys33 each act as nucleophile in the active site. Cys30 and Cys33 are oxidised to a cystine.

This sequence belongs to the thioredoxin family.

In terms of biological role, participates in various redox reactions through the reversible oxidation of its active center dithiol to a disulfide and catalyzes dithiol-disulfide exchange reactions. This Dictyostelium discoideum (Social amoeba) protein is Putative thioredoxin-5 (trxE).